Here is a 289-residue protein sequence, read N- to C-terminus: Ribonuclease HII (289 aa).

Residues 1–55 (MIRDQAKTPGRAKSAAAAKASPAAKGGGNEAAQSAAGKAAAKPAAKPATSKSGKG) are disordered. Low complexity-rich tracts occupy residues 7-24 (KTPGRAKSAAAAKASPAA) and 31-55 (AAQSAAGKAAAKPAAKPATSKSGKG). An RNase H type-2 domain is found at 76 to 264 (WPVAGCDEAG…VVAARRKHQP (189 aa)). D82, E83, and D173 together coordinate a divalent metal cation.

The protein belongs to the RNase HII family. Mn(2+) is required as a cofactor. It depends on Mg(2+) as a cofactor.

It localises to the cytoplasm. It carries out the reaction Endonucleolytic cleavage to 5'-phosphomonoester.. In terms of biological role, endonuclease that specifically degrades the RNA of RNA-DNA hybrids. The chain is Ribonuclease HII from Bradyrhizobium sp. (strain BTAi1 / ATCC BAA-1182).